The following is a 250-amino-acid chain: Aquaporin TIP2-1 (250 aa).

Residue M1 is modified to N-acetylmethionine. Topologically, residues 1–20 (MAGVAFGSFDDSFSLASLRA) are cytoplasmic. At A2 the chain carries N-acetylalanine; in Aquaporin TIP2-1, N-terminally processed. The helical transmembrane segment at 21-41 (YLAEFISTLLFVFAGVGSAIA) threads the bilayer. Over 42–54 (YAKLTSDAALDTP) the chain is Vacuolar. Residues 55 to 75 (GLVAIAVCHGFALFVAVAIGA) form a helical membrane-spanning segment. Residues 76 to 98 (NISGGHVNPAVTFGLAVGGQITV) lie on the Cytoplasmic side of the membrane. Positions 83–85 (NPA) match the NPA 1 motif. The helical transmembrane segment at 99 to 119 (ITGVFYWIAQLLGSTAACFLL) threads the bilayer. Topologically, residues 120-141 (KYVTGGLAVPTHSVAAGLGSIE) are vacuolar. The helical transmembrane segment at 142-162 (GVVMEIIITFALVYTVYATAA) threads the bilayer. The Cytoplasmic portion of the chain corresponds to 163-168 (DPKKGS). Residues 169-189 (LGTIAPLAIGLIVGANILAAG) traverse the membrane as a helical segment. Topologically, residues 190–215 (PFSGGSMNPARSFGPAVAAGDFSGHW) are vacuolar. The short motif at 197-199 (NPA) is the NPA 2 element. A helical membrane pass occupies residues 216-236 (VYWVGPLIGGGLAGLIYGNVF). The Cytoplasmic portion of the chain corresponds to 237–250 (MGSSEHVPLASADF).

It belongs to the MIP/aquaporin (TC 1.A.8) family. TIP (TC 1.A.8.10) subfamily. In terms of assembly, interacts with cucumber mosaic virus (CMV) Protein 1a. As to expression, strongly expressed in shoot, rosette, bolt and flowers. Also expressed in roots, flower buds and above ground.

The protein localises to the vacuole membrane. In terms of biological role, aquaporin required to facilitate the transport of water from the vacuolar compartment to the cytoplasm. Does not promote glycerol permeability. Its function is impaired by Hg(2+). Transports urea in yeast cells and Xenopus laevis oocytes in a pH-independent manner. Transports methylammonium or ammonium in yeast cells and Xenopus laevis oocytes, preferentially at high medium pH. May participate in vacuolar compartmentation and detoxification of ammonium. The protein is Aquaporin TIP2-1 (TIP2-1) of Arabidopsis thaliana (Mouse-ear cress).